We begin with the raw amino-acid sequence, 79 residues long: Small ribosomal subunit protein uS17 (79 aa).

The protein belongs to the universal ribosomal protein uS17 family. Part of the 30S ribosomal subunit.

Its function is as follows. One of the primary rRNA binding proteins, it binds specifically to the 5'-end of 16S ribosomal RNA. The polypeptide is Small ribosomal subunit protein uS17 (Bartonella henselae (strain ATCC 49882 / DSM 28221 / CCUG 30454 / Houston 1) (Rochalimaea henselae)).